Reading from the N-terminus, the 224-residue chain is Inner membrane-spanning protein YciB (224 aa).

6 helical membrane passes run 20–40 (GVNPVLKLVLELGPLLVFFFA), 61–81 (IFVATGLFMAATAIALIASWL), 86–106 (LPIMPMVSGVVVFIFGALTLY), 123–143 (LFGGVLLGGLYFGRSLLGYVF), 156–176 (KLTFRWGLFFLFLAVVNEVVW), and 187–207 (FKVWGIMPITLLFTFSQMPLI).

Belongs to the YciB family.

It is found in the cell inner membrane. In terms of biological role, plays a role in cell envelope biogenesis, maintenance of cell envelope integrity and membrane homeostasis. In Mesorhizobium japonicum (strain LMG 29417 / CECT 9101 / MAFF 303099) (Mesorhizobium loti (strain MAFF 303099)), this protein is Inner membrane-spanning protein YciB.